The chain runs to 557 residues: Membrane protein insertase YidC (557 aa).

The next 5 helical transmembrane spans lie at 3–23 (IKRTVLWVIFFMSAVMLFDNW), 363–383 (FVGNWGWAIVLLTLLIKAVFF), 437–457 (LPVVIQIPVFISLYWVLLASV), 476–496 (PYFILPVLMAVSMFVQTKLNP), and 507–527 (MMFMPIAFSVMFFFFPAGLVL).

It belongs to the OXA1/ALB3/YidC family. Type 1 subfamily. In terms of assembly, interacts with the Sec translocase complex via SecD. Specifically interacts with transmembrane segments of nascent integral membrane proteins during membrane integration.

It is found in the cell inner membrane. Required for the insertion and/or proper folding and/or complex formation of integral membrane proteins into the membrane. Involved in integration of membrane proteins that insert both dependently and independently of the Sec translocase complex, as well as at least some lipoproteins. Aids folding of multispanning membrane proteins. The sequence is that of Membrane protein insertase YidC from Burkholderia thailandensis (strain ATCC 700388 / DSM 13276 / CCUG 48851 / CIP 106301 / E264).